A 136-amino-acid chain; its full sequence is MLSLPRLQTVNDERSPALRALRRTPVMEARPLEVYATYACGERGELAGGLVGHVQWQWLHVDLLWVDAGARGAGLGSRLIARAEARAREEFGCIGSQVETWDFQAPGFYQRVGYRLAASIPDYPPGITSHLLVKEL.

The N-acetyltransferase domain occupies 1 to 136; the sequence is MLSLPRLQTV…ITSHLLVKEL (136 aa).

Functionally, confers resistance to blasticidin S antibiotic. In Streptomyces morookaense (Streptoverticillium morookaense), this protein is Blasticidin-S acetyltransferase (bls).